Consider the following 211-residue polypeptide: MIDTHDITGLILAGGRGSRMGGVDKGLQNFRGLPLALHTLMRLQPQVGDVMINANRNLAAYESFGVPVWPDGLADYAGPLAGFLTGLERCETPWLLTVPCDTPLFPPDLAARLAQAAMREGADIAMAAAPEADERDGTVRVRTQPVFCLLRVTLLESLVRFTQGGGRKIDRWTEQHACAVVPFDQPGDDPHAFYNANTLAELHALEGLGLR.

GTP-binding positions include 12 to 14 (LAG), K25, N53, D71, and D101. D101 lines the Mg(2+) pocket.

This sequence belongs to the MobA family. Monomer. It depends on Mg(2+) as a cofactor.

It is found in the cytoplasm. The catalysed reaction is Mo-molybdopterin + GTP + H(+) = Mo-molybdopterin guanine dinucleotide + diphosphate. In terms of biological role, transfers a GMP moiety from GTP to Mo-molybdopterin (Mo-MPT) cofactor (Moco or molybdenum cofactor) to form Mo-molybdopterin guanine dinucleotide (Mo-MGD) cofactor. The protein is Molybdenum cofactor guanylyltransferase of Acidovorax sp. (strain JS42).